The sequence spans 146 residues: Hemoglobin subunit beta (146 aa).

The residue at position 1 (Val1) is an N-acetylvaline. A Globin domain is found at 2 to 146 (HLTGEEKSLV…VANALAHKYH (145 aa)). Residue Thr12 is modified to Phosphothreonine. Ser44 is subject to Phosphoserine. Position 59 is an N6-acetyllysine (Lys59). Residue His63 coordinates heme b. An N6-acetyllysine modification is found at Lys82. Residue His92 coordinates heme b. An S-nitrosocysteine modification is found at Cys93. Position 144 is an N6-acetyllysine (Lys144).

Belongs to the globin family. As to quaternary structure, heterotetramer of two alpha chains and two beta chains. Red blood cells.

Functionally, involved in oxygen transport from the lung to the various peripheral tissues. The protein is Hemoglobin subunit beta (HBB) of Ursus maritimus (Polar bear).